We begin with the raw amino-acid sequence, 531 residues long: Probable peptide ABC transporter periplasmic-binding protein y4tO (531 aa).

The segment at residues 1 to 32 is a signal peptide (tat-type signal); the sequence is MTISRRDLFKAGLAAGAALSVPSLLRAQTAVA.

This sequence belongs to the bacterial solute-binding protein 5 family. In terms of processing, predicted to be exported by the Tat system. The position of the signal peptide cleavage has not been experimentally proven.

It is found in the periplasm. In terms of biological role, probably part of the binding-protein-dependent transport system y4tOPQRS for a peptide. The chain is Probable peptide ABC transporter periplasmic-binding protein y4tO from Sinorhizobium fredii (strain NBRC 101917 / NGR234).